Reading from the N-terminus, the 506-residue chain is UDP-N-acetylmuramoyl-L-alanyl-D-glutamate--2,6-diaminopimelate ligase (506 aa).

Ser42 contacts UDP-N-acetyl-alpha-D-muramoyl-L-alanyl-D-glutamate. Position 125-131 (125-131 (GTSGKTT)) interacts with ATP. UDP-N-acetyl-alpha-D-muramoyl-L-alanyl-D-glutamate contacts are provided by residues 166 to 167 (TT), Ser193, and Arg201. Lys233 bears the N6-carboxylysine mark. Residues Arg395, 419-422 (DNPR), Gly475, and Glu479 each bind meso-2,6-diaminopimelate. The Meso-diaminopimelate recognition motif motif lies at 419–422 (DNPR).

The protein belongs to the MurCDEF family. MurE subfamily. The cofactor is Mg(2+). Post-translationally, carboxylation is probably crucial for Mg(2+) binding and, consequently, for the gamma-phosphate positioning of ATP.

The protein resides in the cytoplasm. The enzyme catalyses UDP-N-acetyl-alpha-D-muramoyl-L-alanyl-D-glutamate + meso-2,6-diaminopimelate + ATP = UDP-N-acetyl-alpha-D-muramoyl-L-alanyl-gamma-D-glutamyl-meso-2,6-diaminopimelate + ADP + phosphate + H(+). The protein operates within cell wall biogenesis; peptidoglycan biosynthesis. Functionally, catalyzes the addition of meso-diaminopimelic acid to the nucleotide precursor UDP-N-acetylmuramoyl-L-alanyl-D-glutamate (UMAG) in the biosynthesis of bacterial cell-wall peptidoglycan. The chain is UDP-N-acetylmuramoyl-L-alanyl-D-glutamate--2,6-diaminopimelate ligase from Streptomyces coelicolor (strain ATCC BAA-471 / A3(2) / M145).